The primary structure comprises 230 residues: Cytidylate kinase (230 aa).

Residue 10-18 (GPAGSGKST) coordinates ATP.

The protein belongs to the cytidylate kinase family. Type 1 subfamily.

Its subcellular location is the cytoplasm. The catalysed reaction is CMP + ATP = CDP + ADP. It catalyses the reaction dCMP + ATP = dCDP + ADP. The sequence is that of Cytidylate kinase from Leptospira borgpetersenii serovar Hardjo-bovis (strain L550).